The following is a 141-amino-acid chain: Large ribosomal subunit protein uL11 (141 aa).

The protein belongs to the universal ribosomal protein uL11 family. As to quaternary structure, part of the ribosomal stalk of the 50S ribosomal subunit. Interacts with L10 and the large rRNA to form the base of the stalk. L10 forms an elongated spine to which L12 dimers bind in a sequential fashion forming a multimeric L10(L12)X complex. In terms of processing, one or more lysine residues are methylated.

Functionally, forms part of the ribosomal stalk which helps the ribosome interact with GTP-bound translation factors. The chain is Large ribosomal subunit protein uL11 from Sulfurimonas denitrificans (strain ATCC 33889 / DSM 1251) (Thiomicrospira denitrificans (strain ATCC 33889 / DSM 1251)).